Consider the following 282-residue polypeptide: 4-diphosphocytidyl-2-C-methyl-D-erythritol kinase (282 aa).

K11 is a catalytic residue. 93–103 contributes to the ATP binding site; the sequence is LVSAGLAGGSA. Residue D133 is part of the active site.

It belongs to the GHMP kinase family. IspE subfamily.

It carries out the reaction 4-CDP-2-C-methyl-D-erythritol + ATP = 4-CDP-2-C-methyl-D-erythritol 2-phosphate + ADP + H(+). It participates in isoprenoid biosynthesis; isopentenyl diphosphate biosynthesis via DXP pathway; isopentenyl diphosphate from 1-deoxy-D-xylulose 5-phosphate: step 3/6. Its function is as follows. Catalyzes the phosphorylation of the position 2 hydroxy group of 4-diphosphocytidyl-2C-methyl-D-erythritol. The polypeptide is 4-diphosphocytidyl-2-C-methyl-D-erythritol kinase (Ehrlichia chaffeensis (strain ATCC CRL-10679 / Arkansas)).